Here is a 403-residue protein sequence, read N- to C-terminus: Interferon-induced protein with tetratricopeptide repeats 3 (403 aa).

TPR repeat units lie at residues 94–127 (LVTW…CQKF), 136–169 (PELE…KPKD), 172–206 (CSSG…NPQN), and 241–274 (TDVL…TVNN).

This sequence belongs to the IFIT family. Component of an interferon-dependent multiprotein complex, at least composed of IFIT1, IFIT2 and IFIT3. Interacts with IFIT1 and IFIT2. Interacts (via N-terminus) with MAVS, TBK1, TRAF6 and RIGI. Interacts with COPS5.

Its subcellular location is the cytoplasm. The protein resides in the mitochondrion. IFN-induced antiviral protein which acts as an inhibitor of cellular as well as viral processes, cell migration, proliferation, signaling, and viral replication. Enhances MAVS-mediated host antiviral responses by serving as an adapter bridging TBK1 to MAVS which leads to the activation of TBK1 and phosphorylation of IRF3 and phosphorylated IRF3 translocates into nucleus to promote antiviral gene transcription. Exhibits an antiproliferative activity via the up-regulation of cell cycle negative regulators CDKN1A/p21 and CDKN1B/p27. Normally, CDKN1B/p27 turnover is regulated by COPS5, which binds CDKN1B/p27 in the nucleus and exports it to the cytoplasm for ubiquitin-dependent degradation. IFIT3 sequesters COPS5 in the cytoplasm, thereby increasing nuclear CDKN1B/p27 protein levels. Up-regulates CDKN1A/p21 by down-regulating MYC, a repressor of CDKN1A/p21. Can negatively regulate the apoptotic effects of IFIT2. This Mus musculus (Mouse) protein is Interferon-induced protein with tetratricopeptide repeats 3 (Ifit3).